The primary structure comprises 120 residues: Large ribosomal subunit protein bL19 (120 aa).

This sequence belongs to the bacterial ribosomal protein bL19 family.

This protein is located at the 30S-50S ribosomal subunit interface and may play a role in the structure and function of the aminoacyl-tRNA binding site. This chain is Large ribosomal subunit protein bL19, found in Acaryochloris marina (strain MBIC 11017).